We begin with the raw amino-acid sequence, 474 residues long: ATP synthase subunit beta, chloroplastic (474 aa).

155–162 (GGAGVGKT) contacts ATP.

This sequence belongs to the ATPase alpha/beta chains family. As to quaternary structure, F-type ATPases have 2 components, CF(1) - the catalytic core - and CF(0) - the membrane proton channel. CF(1) has five subunits: alpha(3), beta(3), gamma(1), delta(1), epsilon(1). CF(0) has four main subunits: a(1), b(1), b'(1) and c(9-12).

The protein resides in the plastid. It localises to the chloroplast thylakoid membrane. The catalysed reaction is ATP + H2O + 4 H(+)(in) = ADP + phosphate + 5 H(+)(out). Its function is as follows. Produces ATP from ADP in the presence of a proton gradient across the membrane. The catalytic sites are hosted primarily by the beta subunits. The polypeptide is ATP synthase subunit beta, chloroplastic (Thalassiosira pseudonana (Marine diatom)).